We begin with the raw amino-acid sequence, 185 residues long: Peptidyl-tRNA hydrolase (185 aa).

Tyrosine 14 contributes to the tRNA binding site. Histidine 19 functions as the Proton acceptor in the catalytic mechanism. Positions 64, 66, and 112 each coordinate tRNA.

This sequence belongs to the PTH family. In terms of assembly, monomer.

It is found in the cytoplasm. It catalyses the reaction an N-acyl-L-alpha-aminoacyl-tRNA + H2O = an N-acyl-L-amino acid + a tRNA + H(+). Hydrolyzes ribosome-free peptidyl-tRNAs (with 1 or more amino acids incorporated), which drop off the ribosome during protein synthesis, or as a result of ribosome stalling. Its function is as follows. Catalyzes the release of premature peptidyl moieties from peptidyl-tRNA molecules trapped in stalled 50S ribosomal subunits, and thus maintains levels of free tRNAs and 50S ribosomes. In Lactobacillus acidophilus (strain ATCC 700396 / NCK56 / N2 / NCFM), this protein is Peptidyl-tRNA hydrolase.